The sequence spans 591 residues: V-type ATP synthase alpha chain (591 aa).

231–238 (GPFGSGKT) is a binding site for ATP.

Belongs to the ATPase alpha/beta chains family.

The catalysed reaction is ATP + H2O + 4 H(+)(in) = ADP + phosphate + 5 H(+)(out). Its function is as follows. Produces ATP from ADP in the presence of a proton gradient across the membrane. The V-type alpha chain is a catalytic subunit. The chain is V-type ATP synthase alpha chain from Clostridium novyi (strain NT).